Consider the following 131-residue polypeptide: Small ribosomal subunit protein uS8 (131 aa).

It belongs to the universal ribosomal protein uS8 family. As to quaternary structure, part of the 30S ribosomal subunit. Contacts proteins S5 and S12.

In terms of biological role, one of the primary rRNA binding proteins, it binds directly to 16S rRNA central domain where it helps coordinate assembly of the platform of the 30S subunit. In Laribacter hongkongensis (strain HLHK9), this protein is Small ribosomal subunit protein uS8.